Reading from the N-terminus, the 61-residue chain is Photosystem II reaction center protein K (61 aa).

A propeptide spanning residues 1–24 (MLNIFSLICICINSALHSSSFFFA) is cleaved from the precursor. Residues 40 to 60 (MPVIPVLFFLLALVWQAAVSF) traverse the membrane as a helical segment.

The protein belongs to the PsbK family. In terms of assembly, PSII is composed of 1 copy each of membrane proteins PsbA, PsbB, PsbC, PsbD, PsbE, PsbF, PsbH, PsbI, PsbJ, PsbK, PsbL, PsbM, PsbT, PsbX, PsbY, PsbZ, Psb30/Ycf12, at least 3 peripheral proteins of the oxygen-evolving complex and a large number of cofactors. It forms dimeric complexes.

Its subcellular location is the plastid. It is found in the chloroplast thylakoid membrane. Its function is as follows. One of the components of the core complex of photosystem II (PSII). PSII is a light-driven water:plastoquinone oxidoreductase that uses light energy to abstract electrons from H(2)O, generating O(2) and a proton gradient subsequently used for ATP formation. It consists of a core antenna complex that captures photons, and an electron transfer chain that converts photonic excitation into a charge separation. This chain is Photosystem II reaction center protein K, found in Liriodendron tulipifera (Tuliptree).